Reading from the N-terminus, the 275-residue chain is Tryptase (275 aa).

An N-terminal signal peptide occupies residues 1 to 20 (MLNLLVLALPLLVSLVHTAP). Positions 21 to 30 (APGQALERAG) are cleaved as a propeptide — activation peptide. One can recognise a Peptidase S1 domain in the interval 31–272 (IVGGKEAPGH…YLDWIHQCIP (242 aa)). A disulfide bridge connects residues cysteine 59 and cysteine 75. Residues histidine 74 and aspartate 121 each act as charge relay system in the active site. The N-linked (GlcNAc...) asparagine glycan is linked to asparagine 132. 3 disulfides stabilise this stretch: cysteine 155-cysteine 230, cysteine 188-cysteine 211, and cysteine 220-cysteine 248. Serine 224 acts as the Charge relay system in catalysis. Asparagine 233 carries an N-linked (GlcNAc...) asparagine glycan.

It belongs to the peptidase S1 family. Tryptase subfamily. Homotetramer.

It is found in the secreted. The catalysed reaction is Preferential cleavage: Arg-|-Xaa, Lys-|-Xaa, but with more restricted specificity than trypsin.. Functionally, tryptase is the major neutral protease present in mast cells and is secreted upon the coupled activation-degranulation response of this cell type. In Sus scrofa (Pig), this protein is Tryptase (MCT7).